Here is a 225-residue protein sequence, read N- to C-terminus: UPF0758 protein BCE_4545 (225 aa).

Residues 103–225 form the MPN domain; sequence SIRSPEDCAT…FVSLKEKGHI (123 aa). His174, His176, and Asp187 together coordinate Zn(2+). The short motif at 174–187 is the JAMM motif element; it reads HNHPSGDPAPSRED.

It belongs to the UPF0758 family.

In Bacillus cereus (strain ATCC 10987 / NRS 248), this protein is UPF0758 protein BCE_4545.